Here is a 263-residue protein sequence, read N- to C-terminus: Probable 6-oxopurine nucleoside phosphorylase (263 aa).

Phosphate is bound by residues Thr-9, 49–50 (RH), and 82–83 (TA). Met-181 lines the substrate pocket. Thr-182 is a binding site for phosphate. 205 to 207 (NYA) contributes to the substrate binding site.

It belongs to the PNP/MTAP phosphorylase family. MTAP subfamily. As to quaternary structure, homohexamer. Dimer of a homotrimer.

It catalyses the reaction a purine D-ribonucleoside + phosphate = a purine nucleobase + alpha-D-ribose 1-phosphate. It functions in the pathway purine metabolism; purine nucleoside salvage. Functionally, purine nucleoside phosphorylase which is highly specific for 6-oxopurine nucleosides. Cleaves guanosine or inosine to respective bases and sugar-1-phosphate molecules. Involved in purine salvage. The protein is Probable 6-oxopurine nucleoside phosphorylase of Dictyoglomus turgidum (strain DSM 6724 / Z-1310).